The primary structure comprises 127 residues: Large ribosomal subunit protein bL20 (127 aa).

It belongs to the bacterial ribosomal protein bL20 family.

In terms of biological role, binds directly to 23S ribosomal RNA and is necessary for the in vitro assembly process of the 50S ribosomal subunit. It is not involved in the protein synthesizing functions of that subunit. This chain is Large ribosomal subunit protein bL20 (rplT), found in Mycoplasma pneumoniae (strain ATCC 29342 / M129 / Subtype 1) (Mycoplasmoides pneumoniae).